We begin with the raw amino-acid sequence, 687 residues long: Translation initiation factor IF-2 (687 aa).

The tr-type G domain occupies 186 to 355 (KRPPIVTVMG…LLTAEMLELK (170 aa)). The tract at residues 195–202 (GHVDHGKT) is G1. 195 to 202 (GHVDHGKT) contributes to the GTP binding site. The G2 stretch occupies residues 220–224 (GITQH). Residues 241–244 (DTPG) form a G3 region. Residues 241–245 (DTPGH) and 295–298 (NKID) contribute to the GTP site. The segment at 295-298 (NKID) is G4. A G5 region spans residues 331-333 (SAK).

It belongs to the TRAFAC class translation factor GTPase superfamily. Classic translation factor GTPase family. IF-2 subfamily.

The protein localises to the cytoplasm. Functionally, one of the essential components for the initiation of protein synthesis. Protects formylmethionyl-tRNA from spontaneous hydrolysis and promotes its binding to the 30S ribosomal subunits. Also involved in the hydrolysis of GTP during the formation of the 70S ribosomal complex. The sequence is that of Translation initiation factor IF-2 from Clostridium botulinum (strain Alaska E43 / Type E3).